The sequence spans 663 residues: UvrABC system protein B (663 aa).

A Helicase ATP-binding domain is found at aspartate 26–arginine 183. Glycine 39–threonine 46 contributes to the ATP binding site. The Beta-hairpin signature appears at tyrosine 92 to isoleucine 115. A Helicase C-terminal domain is found at glutamine 430–leucine 596. The 36-residue stretch at alanine 624–glutamine 659 folds into the UVR domain.

It belongs to the UvrB family. Forms a heterotetramer with UvrA during the search for lesions. Interacts with UvrC in an incision complex.

The protein localises to the cytoplasm. Its function is as follows. The UvrABC repair system catalyzes the recognition and processing of DNA lesions. A damage recognition complex composed of 2 UvrA and 2 UvrB subunits scans DNA for abnormalities. Upon binding of the UvrA(2)B(2) complex to a putative damaged site, the DNA wraps around one UvrB monomer. DNA wrap is dependent on ATP binding by UvrB and probably causes local melting of the DNA helix, facilitating insertion of UvrB beta-hairpin between the DNA strands. Then UvrB probes one DNA strand for the presence of a lesion. If a lesion is found the UvrA subunits dissociate and the UvrB-DNA preincision complex is formed. This complex is subsequently bound by UvrC and the second UvrB is released. If no lesion is found, the DNA wraps around the other UvrB subunit that will check the other stand for damage. The sequence is that of UvrABC system protein B from Legionella pneumophila (strain Corby).